Consider the following 488-residue polypeptide: Germacrene A acid 8-beta-hydroxylase (488 aa).

The helical; Signal-anchor for type II membrane protein transmembrane segment at 2 to 22 (ELFTIFSIVVSSLILFTFWSL) threads the bilayer. An N-linked (GlcNAc...) asparagine glycan is attached at N407. C429 is a binding site for heme.

It belongs to the cytochrome P450 family. Heme serves as cofactor. Expressed in leaf primordia.

It localises to the membrane. It carries out the reaction germacra-1(10),4,11(13)-trien-12-oate + reduced [NADPH--hemoprotein reductase] + O2 = 8beta-hydroxygermacra-1(10),4,11(13)-trien-12-oate + oxidized [NADPH--hemoprotein reductase] + H2O + H(+). The protein operates within secondary metabolite biosynthesis; terpenoid biosynthesis. Functionally, involved in the biosynthesis of germacrene-derived sesquiterpene lactones. Hydroxylates germacrene A acid to 8-beta-hydroxy-germacrene A acid. Unlike 6-alpha-hydroxy-germacrene A acid, this compound cannot undergo spontaneous lactonization. This chain is Germacrene A acid 8-beta-hydroxylase, found in Helianthus annuus (Common sunflower).